We begin with the raw amino-acid sequence, 264 residues long: Thymidylate synthase (264 aa).

Residue Arg-21 coordinates dUMP. Position 51 (His-51) interacts with (6R)-5,10-methylene-5,6,7,8-tetrahydrofolate. A dUMP-binding site is contributed by 126–127 (RR). Residue Cys-146 is the Nucleophile of the active site. Residues 166–169 (RSCD), Asn-177, and 207–209 (HLY) contribute to the dUMP site. A (6R)-5,10-methylene-5,6,7,8-tetrahydrofolate-binding site is contributed by Asp-169. Position 263 (Ala-263) interacts with (6R)-5,10-methylene-5,6,7,8-tetrahydrofolate.

It belongs to the thymidylate synthase family. Bacterial-type ThyA subfamily. In terms of assembly, homodimer.

The protein localises to the cytoplasm. The enzyme catalyses dUMP + (6R)-5,10-methylene-5,6,7,8-tetrahydrofolate = 7,8-dihydrofolate + dTMP. It functions in the pathway pyrimidine metabolism; dTTP biosynthesis. Its function is as follows. Catalyzes the reductive methylation of 2'-deoxyuridine-5'-monophosphate (dUMP) to 2'-deoxythymidine-5'-monophosphate (dTMP) while utilizing 5,10-methylenetetrahydrofolate (mTHF) as the methyl donor and reductant in the reaction, yielding dihydrofolate (DHF) as a by-product. This enzymatic reaction provides an intracellular de novo source of dTMP, an essential precursor for DNA biosynthesis. This Escherichia coli O9:H4 (strain HS) protein is Thymidylate synthase.